An 884-amino-acid polypeptide reads, in one-letter code: Alanine--tRNA ligase (884 aa).

Residues His-570, His-574, Cys-676, and His-680 each coordinate Zn(2+).

It belongs to the class-II aminoacyl-tRNA synthetase family. The cofactor is Zn(2+).

It is found in the cytoplasm. The enzyme catalyses tRNA(Ala) + L-alanine + ATP = L-alanyl-tRNA(Ala) + AMP + diphosphate. Its function is as follows. Catalyzes the attachment of alanine to tRNA(Ala) in a two-step reaction: alanine is first activated by ATP to form Ala-AMP and then transferred to the acceptor end of tRNA(Ala). Also edits incorrectly charged Ser-tRNA(Ala) and Gly-tRNA(Ala) via its editing domain. The polypeptide is Alanine--tRNA ligase (Lawsonia intracellularis (strain PHE/MN1-00)).